Consider the following 212-residue polypeptide: Ribosome maturation factor RimP (212 aa).

It belongs to the RimP family.

The protein localises to the cytoplasm. Required for maturation of 30S ribosomal subunits. The chain is Ribosome maturation factor RimP from Variovorax paradoxus (strain S110).